The chain runs to 218 residues: Thiopurine S-methyltransferase (218 aa).

Trp11, Leu46, Glu67, and Arg122 together coordinate S-adenosyl-L-methionine.

This sequence belongs to the class I-like SAM-binding methyltransferase superfamily. TPMT family.

It localises to the cytoplasm. It carries out the reaction S-adenosyl-L-methionine + a thiopurine = S-adenosyl-L-homocysteine + a thiopurine S-methylether.. The chain is Thiopurine S-methyltransferase from Vibrio cholerae serotype O1 (strain ATCC 39315 / El Tor Inaba N16961).